The primary structure comprises 186 residues: Elongation factor P (186 aa).

Belongs to the elongation factor P family.

It is found in the cytoplasm. The protein operates within protein biosynthesis; polypeptide chain elongation. Functionally, involved in peptide bond synthesis. Stimulates efficient translation and peptide-bond synthesis on native or reconstituted 70S ribosomes in vitro. Probably functions indirectly by altering the affinity of the ribosome for aminoacyl-tRNA, thus increasing their reactivity as acceptors for peptidyl transferase. This chain is Elongation factor P, found in Enterococcus faecalis (strain ATCC 700802 / V583).